Here is a 356-residue protein sequence, read N- to C-terminus: RuBisCO accumulation factor 1 (356 aa).

The N-terminal alpha-helix stretch occupies residues 7–185 (ALTTEVLQRL…RQALEKLLTD (179 aa)). The interval 209–342 (PYLVPVAGTA…LLLVLRPPQV (134 aa)) is C-terminal beta-sheet.

This sequence belongs to the RAF family. Homodimer. Forms an RbcL(8)-Raf1(8) complex. Forms complexes of many stoichiometries with RbcL with and without RbcS. RbcX and Raf1 can bind simultaneously to RbcL.

The protein localises to the cytoplasm. Functionally, a major RuBisCO chaperone. Acts after GroEL-GroES chaperonin to fold and/or assemble the large subunit of RuBisCO (ccbL, rbcL). Cooperates with RbcX in RbcL folding, plays the major role in assembly of dimers into RbcL(8)-Raf1(8) intermediate complexes. RbcS replaces Raf1, leading to holoenzyme formation. In terms of biological role, required for optimal reconstitution of RuBisCO upon expression of rbcL-rbcS subunits in E.coli. Only interacts with the large subunit (cbbL, rbcL). Probably acts in the final stages of RuBisCO assembly, possibly participating in the addition of the small subunit (ccbS, rbcS). The polypeptide is RuBisCO accumulation factor 1 (Thermosynechococcus vestitus (strain NIES-2133 / IAM M-273 / BP-1)).